Reading from the N-terminus, the 418-residue chain is Tyrosine--tRNA ligase (418 aa).

The 'HIGH' region motif lies at P42–H51. Residues K226 to S230 carry the 'KMSKS' region motif. K229 contacts ATP. The region spanning V339–L400 is the S4 RNA-binding domain.

Belongs to the class-I aminoacyl-tRNA synthetase family. TyrS type 2 subfamily. Homodimer.

Its subcellular location is the cytoplasm. It catalyses the reaction tRNA(Tyr) + L-tyrosine + ATP = L-tyrosyl-tRNA(Tyr) + AMP + diphosphate + H(+). Its function is as follows. Catalyzes the attachment of tyrosine to tRNA(Tyr) in a two-step reaction: tyrosine is first activated by ATP to form Tyr-AMP and then transferred to the acceptor end of tRNA(Tyr). This is Tyrosine--tRNA ligase from Xylella fastidiosa (strain 9a5c).